A 462-amino-acid chain; its full sequence is Fumarate hydratase class II (462 aa).

Residues 97-99 (SGT), 127-130 (HPND), 137-139 (SSN), and Thr185 contribute to the substrate site. His186 (proton donor/acceptor) is an active-site residue. The active site involves Ser316. Substrate is bound by residues Ser317 and 322 to 324 (KVN).

It belongs to the class-II fumarase/aspartase family. Fumarase subfamily. As to quaternary structure, homotetramer.

It localises to the cytoplasm. The enzyme catalyses (S)-malate = fumarate + H2O. It participates in carbohydrate metabolism; tricarboxylic acid cycle; (S)-malate from fumarate: step 1/1. Functionally, involved in the TCA cycle. Catalyzes the stereospecific interconversion of fumarate to L-malate. The chain is Fumarate hydratase class II from Halalkalibacterium halodurans (strain ATCC BAA-125 / DSM 18197 / FERM 7344 / JCM 9153 / C-125) (Bacillus halodurans).